A 233-amino-acid chain; its full sequence is Choline-phosphate cytidylyltransferase (233 aa).

Residues Leu-6, Ala-8, Gly-9, Tyr-80, Ser-85, and Ala-101 each contribute to the CDP-choline site. Asp-102 serves as a coordination point for Mg(2+). Tyr-187 lines the CDP-choline pocket. Mg(2+) is bound by residues Glu-213 and Asp-215.

The protein belongs to the LicC/PntC cytidylyltransferase family. Requires Mg(2+) as cofactor.

The catalysed reaction is phosphocholine + CTP + H(+) = CDP-choline + diphosphate. Its pathway is lipopolysaccharide biosynthesis. Its function is as follows. Cytidylyltransferase involved in the biosynthesis of lipopolysaccharides (LPS), a necessary component and antigenic determinant of the outer membrane that has been shown to be an important factor in the host-parasite interaction in a number of Gram-negative species. Catalyzes the activation of phosphocholine (P-Cho) to CDP-choline (CDP-Cho). LicC is critical for the expression of the 6A2-specific epitope. The protein is Choline-phosphate cytidylyltransferase of Haemophilus influenzae (strain ATCC 51907 / DSM 11121 / KW20 / Rd).